Reading from the N-terminus, the 256-residue chain is Probable transcriptional regulatory protein A1I_03240 (256 aa).

The interval 1–21 (MAGHSKFKNIQHRKGAQDKKR) is disordered.

This sequence belongs to the TACO1 family.

It localises to the cytoplasm. This is Probable transcriptional regulatory protein A1I_03240 from Rickettsia bellii (strain OSU 85-389).